Reading from the N-terminus, the 223-residue chain is Thiamine-phosphate synthase (223 aa).

Residues 45–49 (QYREK) and asparagine 77 each bind 4-amino-2-methyl-5-(diphosphooxymethyl)pyrimidine. Residues aspartate 78 and aspartate 97 each coordinate Mg(2+). Threonine 116 contacts 4-amino-2-methyl-5-(diphosphooxymethyl)pyrimidine. Residue 142–144 (SYT) participates in 2-[(2R,5Z)-2-carboxy-4-methylthiazol-5(2H)-ylidene]ethyl phosphate binding. Lysine 145 contacts 4-amino-2-methyl-5-(diphosphooxymethyl)pyrimidine. 2-[(2R,5Z)-2-carboxy-4-methylthiazol-5(2H)-ylidene]ethyl phosphate-binding positions include glycine 173 and 193–194 (VT).

This sequence belongs to the thiamine-phosphate synthase family. Mg(2+) serves as cofactor.

The enzyme catalyses 2-[(2R,5Z)-2-carboxy-4-methylthiazol-5(2H)-ylidene]ethyl phosphate + 4-amino-2-methyl-5-(diphosphooxymethyl)pyrimidine + 2 H(+) = thiamine phosphate + CO2 + diphosphate. It catalyses the reaction 2-(2-carboxy-4-methylthiazol-5-yl)ethyl phosphate + 4-amino-2-methyl-5-(diphosphooxymethyl)pyrimidine + 2 H(+) = thiamine phosphate + CO2 + diphosphate. It carries out the reaction 4-methyl-5-(2-phosphooxyethyl)-thiazole + 4-amino-2-methyl-5-(diphosphooxymethyl)pyrimidine + H(+) = thiamine phosphate + diphosphate. Its pathway is cofactor biosynthesis; thiamine diphosphate biosynthesis; thiamine phosphate from 4-amino-2-methyl-5-diphosphomethylpyrimidine and 4-methyl-5-(2-phosphoethyl)-thiazole: step 1/1. Functionally, condenses 4-methyl-5-(beta-hydroxyethyl)thiazole monophosphate (THZ-P) and 2-methyl-4-amino-5-hydroxymethyl pyrimidine pyrophosphate (HMP-PP) to form thiamine monophosphate (TMP). The sequence is that of Thiamine-phosphate synthase from Dictyoglomus thermophilum (strain ATCC 35947 / DSM 3960 / H-6-12).